Consider the following 479-residue polypeptide: Glutamyl-tRNA(Gln) amidotransferase subunit A (479 aa).

Residues lysine 71 and serine 146 each act as charge relay system in the active site. Serine 170 functions as the Acyl-ester intermediate in the catalytic mechanism.

The protein belongs to the amidase family. GatA subfamily. As to quaternary structure, heterotrimer of A, B and C subunits.

It carries out the reaction L-glutamyl-tRNA(Gln) + L-glutamine + ATP + H2O = L-glutaminyl-tRNA(Gln) + L-glutamate + ADP + phosphate + H(+). Functionally, allows the formation of correctly charged Gln-tRNA(Gln) through the transamidation of misacylated Glu-tRNA(Gln) in organisms which lack glutaminyl-tRNA synthetase. The reaction takes place in the presence of glutamine and ATP through an activated gamma-phospho-Glu-tRNA(Gln). In Lactobacillus acidophilus (strain ATCC 700396 / NCK56 / N2 / NCFM), this protein is Glutamyl-tRNA(Gln) amidotransferase subunit A.